Reading from the N-terminus, the 699-residue chain is Elongation factor G (699 aa).

Residues Glu8–Leu288 enclose the tr-type G domain. GTP is bound by residues Ala17–Thr24, Asp86–His90, and Asn140–Asp143.

This sequence belongs to the TRAFAC class translation factor GTPase superfamily. Classic translation factor GTPase family. EF-G/EF-2 subfamily.

The protein resides in the cytoplasm. Catalyzes the GTP-dependent ribosomal translocation step during translation elongation. During this step, the ribosome changes from the pre-translocational (PRE) to the post-translocational (POST) state as the newly formed A-site-bound peptidyl-tRNA and P-site-bound deacylated tRNA move to the P and E sites, respectively. Catalyzes the coordinated movement of the two tRNA molecules, the mRNA and conformational changes in the ribosome. The polypeptide is Elongation factor G (Agrobacterium fabrum (strain C58 / ATCC 33970) (Agrobacterium tumefaciens (strain C58))).